Consider the following 296-residue polypeptide: Glycine--tRNA ligase alpha subunit (296 aa).

It belongs to the class-II aminoacyl-tRNA synthetase family. Tetramer of two alpha and two beta subunits.

It localises to the cytoplasm. The enzyme catalyses tRNA(Gly) + glycine + ATP = glycyl-tRNA(Gly) + AMP + diphosphate. This is Glycine--tRNA ligase alpha subunit from Desulfitobacterium hafniense (strain DSM 10664 / DCB-2).